Consider the following 314-residue polypeptide: Tudor-interacting repair regulator protein (314 aa).

Gly2 carries N-myristoyl glycine lipidation.

The protein belongs to the Nudix hydrolase family. TIRR subfamily. Interacts (via the cytoplasmic part) with syndecan-4 (SDC4), but not with other syndecan proteins. Myristoylated in vitro; additional evidence is however required to confirm myristoylation in vivo. As to expression, ubiquitously expressed. Expressed in embryonic brain, eyes, gizzard, heart, intestine, kidney, liver, tibia and skin.

It localises to the nucleus. The protein localises to the cytoplasm. Its subcellular location is the cytoskeleton. It is found in the cell membrane. The protein resides in the cell junction. It localises to the focal adhesion. Its function is as follows. Key regulator of TP53BP1 required to stabilize TP53BP1 and regulate its recruitment to chromatin. The polypeptide is Tudor-interacting repair regulator protein (NUDT16L1) (Gallus gallus (Chicken)).